The following is a 302-amino-acid chain: Homoserine O-acetyltransferase (302 aa).

The active-site Acyl-thioester intermediate is Cys-142. Residues Lys-163 and Ser-192 each coordinate substrate. His-235 (proton acceptor) is an active-site residue. Residue Glu-237 is part of the active site. Residue Arg-249 participates in substrate binding.

It belongs to the MetA family.

The protein localises to the cytoplasm. It catalyses the reaction L-homoserine + acetyl-CoA = O-acetyl-L-homoserine + CoA. The protein operates within amino-acid biosynthesis; L-methionine biosynthesis via de novo pathway; O-acetyl-L-homoserine from L-homoserine: step 1/1. Functionally, transfers an acetyl group from acetyl-CoA to L-homoserine, forming acetyl-L-homoserine. This is Homoserine O-acetyltransferase from Geobacillus sp. (strain WCH70).